Reading from the N-terminus, the 554-residue chain is CTP synthase (554 aa).

An amidoligase domain region spans residues 1–265; that stretch reads MTPLIFVTGG…DEIVVNQLKL (265 aa). Residue Ser-13 participates in CTP binding. Residue Ser-13 coordinates UTP. Residues 14–19 and Asp-71 each bind ATP; that span reads SLGKGI. The Mg(2+) site is built by Asp-71 and Glu-139. Residues 146 to 148, 186 to 191, and Lys-222 contribute to the CTP site; these read DIE and KTKPTQ. Residues 186–191 and Lys-222 each bind UTP; that span reads KTKPTQ. Residues 292–545 form the Glutamine amidotransferase type-1 domain; it reads TIAVVGKYVD…IRAARERKAG (254 aa). Gly-353 is a binding site for L-glutamine. The Nucleophile; for glutamine hydrolysis role is filled by Cys-380. Residues 381 to 384, Glu-404, and Arg-471 contribute to the L-glutamine site; that span reads YGMQ. Active-site residues include His-518 and Glu-520.

This sequence belongs to the CTP synthase family. In terms of assembly, homotetramer.

It catalyses the reaction UTP + L-glutamine + ATP + H2O = CTP + L-glutamate + ADP + phosphate + 2 H(+). The enzyme catalyses L-glutamine + H2O = L-glutamate + NH4(+). The catalysed reaction is UTP + NH4(+) + ATP = CTP + ADP + phosphate + 2 H(+). It participates in pyrimidine metabolism; CTP biosynthesis via de novo pathway; CTP from UDP: step 2/2. Allosterically activated by GTP, when glutamine is the substrate; GTP has no effect on the reaction when ammonia is the substrate. The allosteric effector GTP functions by stabilizing the protein conformation that binds the tetrahedral intermediate(s) formed during glutamine hydrolysis. Inhibited by the product CTP, via allosteric rather than competitive inhibition. In terms of biological role, catalyzes the ATP-dependent amination of UTP to CTP with either L-glutamine or ammonia as the source of nitrogen. Regulates intracellular CTP levels through interactions with the four ribonucleotide triphosphates. This Stenotrophomonas maltophilia (strain R551-3) protein is CTP synthase.